The primary structure comprises 280 residues: Fructose-1,6-bisphosphatase class 1 (280 aa).

Glu-64, Asp-83, Leu-85, and Asp-86 together coordinate Mg(2+). Substrate-binding positions include Asp-86–Ser-89, Tyr-189, and Lys-220. Residue Glu-226 participates in Mg(2+) binding.

Belongs to the FBPase class 1 family. In terms of assembly, homotetramer. Requires Mg(2+) as cofactor.

The protein resides in the cytoplasm. The catalysed reaction is beta-D-fructose 1,6-bisphosphate + H2O = beta-D-fructose 6-phosphate + phosphate. It functions in the pathway carbohydrate biosynthesis; gluconeogenesis. This chain is Fructose-1,6-bisphosphatase class 1, found in Campylobacter jejuni (strain RM1221).